The chain runs to 502 residues: Bone morphogenetic protein receptor type-1B (502 aa).

Residues 1–10 (MPLLSSSKLS) show a composition bias toward polar residues. The N-terminal stretch at 1–13 (MPLLSSSKLSMES) is a signal peptide. The segment at 1-27 (MPLLSSSKLSMESRKEDSEGTAPAPPQ) is disordered. Residues 14-126 (RKEDSEGTAP…DFAEGNIHHK (113 aa)) are Extracellular-facing. 5 cysteine pairs are disulfide-bonded: cysteine 32–cysteine 53, cysteine 34–cysteine 38, cysteine 47–cysteine 71, cysteine 81–cysteine 95, and cysteine 96–cysteine 102. The N-linked (GlcNAc...) asparagine glycan is linked to asparagine 44. Residues 127–148 (ALLISVTVCSILLVLIIIFCYF) form a helical membrane-spanning segment. At 149–502 (RYKRQEARPR…KMSESQDIKL (354 aa)) the chain is on the cytoplasmic side. The GS domain maps to 174-203 (ESLKDLIEQSQSSGSGSGLPLLVQRTIAKQ). The region spanning 204 to 494 (IQMVKQIGKG…LRVKKTLAKM (291 aa)) is the Protein kinase domain. ATP is bound by residues 210 to 218 (IGKGRYGEV) and lysine 231. The active-site Proton acceptor is aspartate 332.

This sequence belongs to the protein kinase superfamily. TKL Ser/Thr protein kinase family. TGFB receptor subfamily. Mg(2+) serves as cofactor. Requires Mn(2+) as cofactor. In terms of processing, autophosphorylated.

It is found in the cell membrane. The enzyme catalyses L-threonyl-[receptor-protein] + ATP = O-phospho-L-threonyl-[receptor-protein] + ADP + H(+). It carries out the reaction L-seryl-[receptor-protein] + ATP = O-phospho-L-seryl-[receptor-protein] + ADP + H(+). Functionally, on ligand binding, forms a receptor complex consisting of two type II and two type I transmembrane serine/threonine kinases. Type II receptors phosphorylate and activate type I receptors which autophosphorylate, then bind and activate SMAD transcription. Positively regulates chondrocyte differentiation. The protein is Bone morphogenetic protein receptor type-1B (BMPR1B) of Gallus gallus (Chicken).